The chain runs to 179 residues: GTP-dependent dephospho-CoA kinase (179 aa).

Residues D55, V57, D74, K76, and E128 each contribute to the GTP site.

The protein belongs to the GTP-dependent DPCK family.

It catalyses the reaction 3'-dephospho-CoA + GTP = GDP + CoA + H(+). The protein operates within cofactor biosynthesis; coenzyme A biosynthesis. In terms of biological role, catalyzes the GTP-dependent phosphorylation of the 3'-hydroxyl group of dephosphocoenzyme A to form coenzyme A (CoA). The protein is GTP-dependent dephospho-CoA kinase of Saccharolobus solfataricus (strain ATCC 35092 / DSM 1617 / JCM 11322 / P2) (Sulfolobus solfataricus).